A 253-amino-acid chain; its full sequence is Tabinhibitin 3 (253 aa).

The N-terminal stretch at 1 to 22 (MTLKRIFCAALALIVLQSVASA) is a signal peptide. The SCP domain maps to 66–209 (LQKTNWLRGV…LKRALFTCNF (144 aa)). Positions 222–224 (RGD) match the Cell attachment site motif.

The protein belongs to the CRISP family. As to expression, expressed in salivary glands.

It is found in the secreted. Functionally, inhibits platelet aggregation induced by all agonists tested (ADP, arachidonic acid, the thromboxane A2 analog U46619, thrombin, and snake venom snaclecs (TMVA that activates platelet through GPIB, and stejnulxin that specifically acts through GPVI (GP6))). May act by competing with fibrinogen for binding to glycoprotein IIb/IIIa (ITGA2B/ITGB3). The protein is Tabinhibitin 3 of Tabanus yao (Horsefly).